Consider the following 225-residue polypeptide: Protein-L-isoaspartate O-methyltransferase (225 aa).

Residue Ser75 is part of the active site.

The protein belongs to the methyltransferase superfamily. L-isoaspartyl/D-aspartyl protein methyltransferase family.

It localises to the cytoplasm. It carries out the reaction [protein]-L-isoaspartate + S-adenosyl-L-methionine = [protein]-L-isoaspartate alpha-methyl ester + S-adenosyl-L-homocysteine. Catalyzes the methyl esterification of L-isoaspartyl residues in peptides and proteins that result from spontaneous decomposition of normal L-aspartyl and L-asparaginyl residues. It plays a role in the repair and/or degradation of damaged proteins. This Stenotrophomonas maltophilia (strain R551-3) protein is Protein-L-isoaspartate O-methyltransferase.